The primary structure comprises 180 residues: MSKFKQLYKPLLDNAQWETPLSLAIEGTAFGHWLLEPNSLSRRLQRHCDEFTVSLIEQKKIDSTMLSADERELIGDVDCLLRKVVLMGDGQPWVFARTLIPLSTLTGQESDLEQLGEMPLGFRVFTDRSARRDALEVANTGTQAQPLWARRSRLWINNKPLLVAELFLAQAPVYSKEKQC.

The substrate site is built by arginine 82, leucine 120, and glutamate 165.

This sequence belongs to the UbiC family.

It is found in the cytoplasm. The enzyme catalyses chorismate = 4-hydroxybenzoate + pyruvate. Its pathway is cofactor biosynthesis; ubiquinone biosynthesis. Its function is as follows. Removes the pyruvyl group from chorismate, with concomitant aromatization of the ring, to provide 4-hydroxybenzoate (4HB) for the ubiquinone pathway. The sequence is that of Probable chorismate pyruvate-lyase from Photobacterium profundum (strain SS9).